The sequence spans 26 residues: uncharacterized protein (26 aa).

Polar residues predominate over residues 1–16; the sequence is MPEQKANCSPNGNITV. Residues 1–26 form a disordered region; sequence MPEQKANCSPNGNITVDSMIMSLGSS.

This is an uncharacterized protein from Saccharomyces cerevisiae (strain ATCC 204508 / S288c) (Baker's yeast).